Reading from the N-terminus, the 694-residue chain is Elongation factor G (694 aa).

The region spanning Lys-11–Leu-285 is the tr-type G domain. GTP-binding positions include Ala-20 to Thr-27, Asp-84 to His-88, and Asn-138 to Asp-141.

The protein belongs to the TRAFAC class translation factor GTPase superfamily. Classic translation factor GTPase family. EF-G/EF-2 subfamily.

It localises to the cytoplasm. Its function is as follows. Catalyzes the GTP-dependent ribosomal translocation step during translation elongation. During this step, the ribosome changes from the pre-translocational (PRE) to the post-translocational (POST) state as the newly formed A-site-bound peptidyl-tRNA and P-site-bound deacylated tRNA move to the P and E sites, respectively. Catalyzes the coordinated movement of the two tRNA molecules, the mRNA and conformational changes in the ribosome. The chain is Elongation factor G from Mycoplasma mobile (strain ATCC 43663 / 163K / NCTC 11711) (Mesomycoplasma mobile).